A 490-amino-acid chain; its full sequence is Bifunctional protein HldE (490 aa).

The segment at 1–330 is ribokinase; the sequence is MLDFEAVLPA…RKVLPPASLA (330 aa). 205–208 provides a ligand contact to ATP; that stretch reads NRKE. Asp-275 is an active-site residue. Positions 358–490 are cytidylyltransferase; sequence FTNGCFDILH…LVARAQNGKA (133 aa).

This sequence in the N-terminal section; belongs to the carbohydrate kinase PfkB family. The protein in the C-terminal section; belongs to the cytidylyltransferase family. As to quaternary structure, homodimer.

It carries out the reaction D-glycero-beta-D-manno-heptose 7-phosphate + ATP = D-glycero-beta-D-manno-heptose 1,7-bisphosphate + ADP + H(+). The catalysed reaction is D-glycero-beta-D-manno-heptose 1-phosphate + ATP + H(+) = ADP-D-glycero-beta-D-manno-heptose + diphosphate. It functions in the pathway nucleotide-sugar biosynthesis; ADP-L-glycero-beta-D-manno-heptose biosynthesis; ADP-L-glycero-beta-D-manno-heptose from D-glycero-beta-D-manno-heptose 7-phosphate: step 1/4. Its pathway is nucleotide-sugar biosynthesis; ADP-L-glycero-beta-D-manno-heptose biosynthesis; ADP-L-glycero-beta-D-manno-heptose from D-glycero-beta-D-manno-heptose 7-phosphate: step 3/4. Functionally, catalyzes the phosphorylation of D-glycero-D-manno-heptose 7-phosphate at the C-1 position to selectively form D-glycero-beta-D-manno-heptose-1,7-bisphosphate. In terms of biological role, catalyzes the ADP transfer from ATP to D-glycero-beta-D-manno-heptose 1-phosphate, yielding ADP-D-glycero-beta-D-manno-heptose. The chain is Bifunctional protein HldE from Rhodopseudomonas palustris (strain BisB18).